Consider the following 225-residue polypeptide: MLKRLKSFLFKMVLILLIAPIVLVGVVKYVDPPIWGWKLSRIVAPPKNYPDSSQHEWVSLTRISKNMQLAVIATEDQKFPHHYGVDFESLFDVISEAGDHGPSRGASTITQQAAKNVFLFPSHSYVRKAYELYFALLMELMWSKERILEVYLNVVEFGPGIYGAEAAAQNYFGVSAKQLSKWQAARLAVVLPNPYRIKVYPQSDYTARRTRWAMNQMSNLGSVQL.

The chain crosses the membrane as a helical span at residues 7 to 27; the sequence is SFLFKMVLILLIAPIVLVGVV.

It belongs to the glycosyltransferase 51 family.

Its subcellular location is the cell inner membrane. It carries out the reaction [GlcNAc-(1-&gt;4)-Mur2Ac(oyl-L-Ala-gamma-D-Glu-L-Lys-D-Ala-D-Ala)](n)-di-trans,octa-cis-undecaprenyl diphosphate + beta-D-GlcNAc-(1-&gt;4)-Mur2Ac(oyl-L-Ala-gamma-D-Glu-L-Lys-D-Ala-D-Ala)-di-trans,octa-cis-undecaprenyl diphosphate = [GlcNAc-(1-&gt;4)-Mur2Ac(oyl-L-Ala-gamma-D-Glu-L-Lys-D-Ala-D-Ala)](n+1)-di-trans,octa-cis-undecaprenyl diphosphate + di-trans,octa-cis-undecaprenyl diphosphate + H(+). The protein operates within cell wall biogenesis; peptidoglycan biosynthesis. Its function is as follows. Peptidoglycan polymerase that catalyzes glycan chain elongation from lipid-linked precursors. The chain is Biosynthetic peptidoglycan transglycosylase from Vibrio parahaemolyticus serotype O3:K6 (strain RIMD 2210633).